A 156-amino-acid chain; its full sequence is Small ribosomal subunit protein uS7 (156 aa).

Belongs to the universal ribosomal protein uS7 family. Part of the 30S ribosomal subunit. Contacts proteins S9 and S11.

Its function is as follows. One of the primary rRNA binding proteins, it binds directly to 16S rRNA where it nucleates assembly of the head domain of the 30S subunit. Is located at the subunit interface close to the decoding center, probably blocks exit of the E-site tRNA. The chain is Small ribosomal subunit protein uS7 from Magnetococcus marinus (strain ATCC BAA-1437 / JCM 17883 / MC-1).